The following is a 160-amino-acid chain: Major strawberry allergen Fra a 1.08 (160 aa).

It belongs to the BetVI family. In terms of processing, phosphorylated in vivo. Phosphorylation prevents its activity as ribonuclease. As to expression, highly expressed in roots. Expressed a low levels in ripe red fruits.

Possesses ribonuclease activity in vitro. This is Major strawberry allergen Fra a 1.08 from Fragaria ananassa (Strawberry).